A 165-amino-acid polypeptide reads, in one-letter code: Chemotaxis protein CheW (165 aa).

The protein belongs to the CheW family.

Its function is as follows. Plays an essential role in chemotaxis signal transduction system in order to colonize the host stomach. The sequence is that of Chemotaxis protein CheW from Helicobacter pylori (strain ATCC 700392 / 26695) (Campylobacter pylori).